We begin with the raw amino-acid sequence, 130 residues long: Acidic phospholipase A2 daboiatoxin B chain (130 aa).

Positions 1 to 8 (MCLIGVEG) are cleaved as a signal peptide. 7 disulfide bridges follow: Cys-34/Cys-123, Cys-36/Cys-52, Cys-51/Cys-103, Cys-57/Cys-130, Cys-58/Cys-96, Cys-65/Cys-89, and Cys-83/Cys-94. Residues Tyr-35, Gly-37, and Gly-39 each contribute to the Ca(2+) site. His-55 is an active-site residue. A Ca(2+)-binding site is contributed by Asp-56. Asp-97 is a catalytic residue.

Belongs to the phospholipase A2 family. Group II subfamily. D49 sub-subfamily. Heterodimer of an acidic protein having phospholipase A2 activity (B chain) and an A chain which weakly inhibits the B chain enzymatic activity but potentiates its lethal potency. Ca(2+) serves as cofactor. Expressed by the venom gland.

Its subcellular location is the secreted. The enzyme catalyses a 1,2-diacyl-sn-glycero-3-phosphocholine + H2O = a 1-acyl-sn-glycero-3-phosphocholine + a fatty acid + H(+). Monomer: Snake venom phospholipase A2 (PLA2) that shows a high PLA2 activity (2110 umol/min/mg). In terms of biological role, heterodimer (A and B chains): snake venom phospholipase A2 that shows a moderate PLA2 activity (1377 umol/min/mg). Acts as a presynaptic neurotoxin. In vivo, induces edema and produces neurotoxic symptoms in mice. It exhibits indirect hemolysis and a strong myonecrotic activity and is cytotoxic. PLA2 catalyzes the calcium-dependent hydrolysis of the 2-acyl groups in 3-sn-phosphoglycerides. The chain is Acidic phospholipase A2 daboiatoxin B chain from Daboia siamensis (Eastern Russel's viper).